The sequence spans 174 residues: Beta-lactoglobulin (174 aa).

Positions 1–18 are cleaved as a signal peptide; that stretch reads MKFLLLTVGLTSICAIQA. Cystine bridges form between Cys-79-Cys-172 and Cys-122-Cys-134.

It belongs to the calycin superfamily. Lipocalin family. Monomer.

The protein localises to the secreted. In terms of biological role, lactoglobulin is the primary component of whey, it binds retinol and is probably involved in the transport of that molecule. This is Beta-lactoglobulin (LGB) from Trichosurus vulpecula (Brush-tailed possum).